A 450-amino-acid chain; its full sequence is L-lysine-epsilon aminotransferase (450 aa).

2 residues coordinate pyridoxal 5'-phosphate: Gly-127 and Ala-128. 2-oxoglutarate-binding residues include Arg-168 and Gln-274. Arg-168 serves as a coordination point for L-lysine. Gln-274 contributes to the pyridoxal 5'-phosphate binding site. The residue at position 300 (Lys-300) is an N6-(pyridoxal phosphate)lysine. Arg-423 provides a ligand contact to 2-oxoglutarate.

Belongs to the class-III pyridoxal-phosphate-dependent aminotransferase family. The cofactor is pyridoxal 5'-phosphate.

It catalyses the reaction L-lysine + 2-oxoglutarate = (S)-2-amino-6-oxohexanoate + L-glutamate. It participates in antibiotic biosynthesis; cephamycin C biosynthesis. In terms of biological role, catalyzes the transfer of the terminal amino group of L-lysine to alpha-ketoglutarate to yield L-glutamate and 2-aminoadipate 6-semialdehyde ((S)-2-amino-6-oxohexanoate), which is spontaneously converted to the dehydrated form 1-piperideine 6-carboxylate. This is L-lysine-epsilon aminotransferase from Amycolatopsis lactamdurans (Nocardia lactamdurans).